The primary structure comprises 696 residues: D-(-)-3-hydroxybutyrate oligomer hydrolase (696 aa).

Residues 1–26 form the signal peptide; it reads MTKLGWGRRVVWGAALAAVAMLGACN. S309 functions as the Charge relay system in the catalytic mechanism.

This sequence belongs to the D-(-)-3-hydroxybutyrate oligomer hydrolase family.

Its subcellular location is the secreted. The catalysed reaction is (3R)-hydroxybutanoate dimer + H2O = 2 (R)-3-hydroxybutanoate + H(+). It functions in the pathway lipid metabolism; butanoate metabolism. In terms of biological role, participates in the degradation of poly-3-hydroxybutyrate (PHB). It works downstream of poly(3-hydroxybutyrate) depolymerase, hydrolyzing D(-)-3-hydroxybutyrate oligomers of various length (3HB-oligomers) into 3HB-monomers. This is D-(-)-3-hydroxybutyrate oligomer hydrolase from Burkholderia cenocepacia (strain HI2424).